Reading from the N-terminus, the 88-residue chain is MQKDVEYIELLDEQGEQIKFKVITYFQIDEINGEYVVVTPAENDECDEAFVLKVISDEDGNETLVSIEDEKEFDLVEEAYNLVMSEQD.

Belongs to the UPF0473 family.

This is UPF0473 protein CLL_A1177 from Clostridium botulinum (strain Eklund 17B / Type B).